The chain runs to 326 residues: Vitamin B12 import system permease protein BtuC (326 aa).

Transmembrane regions (helical) follow at residues 15 to 35 (WLLS…CAGE), 61 to 81 (LAVL…QALF), 88 to 108 (PGLL…VLLG), 112 to 132 (LPGW…TLIL), 146 to 166 (LLAG…AIYF), 184 to 204 (GGVD…LIWI), 240 to 260 (GWMV…GLVI), 274 to 294 (VLLP…DVVA), and 302 to 322 (ELPI…WLLL).

It belongs to the binding-protein-dependent transport system permease family. FecCD subfamily. The complex is composed of two ATP-binding proteins (BtuD), two transmembrane proteins (BtuC) and a solute-binding protein (BtuF).

The protein resides in the cell inner membrane. Its function is as follows. Part of the ABC transporter complex BtuCDF involved in vitamin B12 import. Involved in the translocation of the substrate across the membrane. The polypeptide is Vitamin B12 import system permease protein BtuC (Salmonella enteritidis PT4 (strain P125109)).